The primary structure comprises 670 residues: Transcription factor 4 (670 aa).

The tract at residues 1–83 (MHHQQRMAAL…GTPYDHMTSR (83 aa)) is essential for MYOD1 inhibition. 6 disordered regions span residues 24-244 (AMFS…LGNS), 262-320 (LSYP…SQTG), 335-378 (HTNN…EGPL), 406-426 (PSTA…PSHN), 465-573 (SLLP…MANN), and 637-670 (KRRE…MGQM). Positions 29-49 (PVSSGKNGPTSLASGHFTGSN) are enriched in polar residues. 3 positions are modified to phosphoserine: S66, S87, and S92. Composition is skewed to polar residues over residues 107 to 125 (GSYS…QQSL), 136 to 154 (GTLS…SSNN), 205 to 215 (PAASTFPSSFF), and 265 to 305 (PSHS…TDSI). The span at 336–347 (TNNSFSSNPSTP) shows a compositional bias: low complexity. A compositionally biased stretch (polar residues) spans 364 to 373 (NGGQASSSPN). Residue S371 is modified to Phosphoserine. The leucine-zipper stretch occupies residues 378-399 (LHSLQSRIEDRLERLDDAIHVL). 2 stretches are compositionally biased toward low complexity: residues 466–479 (LLPN…LPVQ) and 502–511 (GQSVSSGSSE). S514 is subject to Phosphoserine. 2 stretches are compositionally biased toward basic and acidic residues: residues 526-542 (KSSE…DIKS) and 558-573 (PEQK…MANN). In terms of domain architecture, bHLH spans 567-620 (ERRMANNARERLRVRDINEAFKELGRMVQLHLKSDKPQTKLLILHQAVAVILSL). Residues 622 to 645 (QQVRERNLNPKAACLKRREEEKVS) are class A specific domain.

Efficient DNA binding requires dimerization with another bHLH protein. Isoform 2 seems to form inactive heterodimers with MYOD1. Interacts with HIVEP2. Interacts with NEUROD2. Interacts with AGBL1. Interacts with BHLHA9. As to expression, expressed in the cerebral cortex, Purkinje and granule cell layers of the cerebellum, olfactory neuroepithelium, pyramidal cells of hippocampal layers CA1-CA4, and in the granular cells of the dentate gyrus.

It localises to the nucleus. Functionally, transcription factor that binds to the immunoglobulin enhancer Mu-E5/KE5-motif. Involved in the initiation of neuronal differentiation. Activates transcription by binding to the E box (5'-CANNTG-3'). Isoform 2 inhibits MYOD1 activation of the cardiac alpha-actin promoter. Binds to the E-box present in the somatostatin receptor 2 initiator element (SSTR2-INR) to activate transcription. May have a regulatory function in developmental processes as well as during neuronal plasticity. The protein is Transcription factor 4 (Tcf4) of Mus musculus (Mouse).